The following is a 159-amino-acid chain: MNIRRKNRLWIACAVLAGLALTIGLVLYALRSNIDLFYTPGEILYGKRETQQMPEVGQRLRVGGMVMPGSVQRDPNSLKVTFTIYDAEGSVDVSYEGILPDLFREGQGVVVQGELEKGNHILAKEVLAKHDENYTPPEVEKAMEANHRRPASVYKDPAS.

The Cytoplasmic portion of the chain corresponds to 1 to 8 (MNIRRKNR). Residues 9–29 (LWIACAVLAGLALTIGLVLYA) traverse the membrane as a helical; Signal-anchor for type II membrane protein segment. Residues 30–159 (LRSNIDLFYT…PASVYKDPAS (130 aa)) are Periplasmic-facing. Positions 130 and 134 each coordinate heme. Positions 132–147 (ENYTPPEVEKAMEANH) are enriched in basic and acidic residues. The tract at residues 132 to 159 (ENYTPPEVEKAMEANHRRPASVYKDPAS) is disordered.

This sequence belongs to the CcmE/CycJ family.

It localises to the cell inner membrane. In terms of biological role, heme chaperone required for the biogenesis of c-type cytochromes. Transiently binds heme delivered by CcmC and transfers the heme to apo-cytochromes in a process facilitated by CcmF and CcmH. In Escherichia coli (strain 55989 / EAEC), this protein is Cytochrome c-type biogenesis protein CcmE.